The following is a 185-amino-acid chain: HTH-type transcriptional regulator Hpr (185 aa).

The HTH marR-type domain maps to 13-157 (AMIFSQRIAQ…LIAILRNIYG (145 aa)). The H-T-H motif DNA-binding region spans 63 to 86 (ISEIAKFGVMHVSTAFNFSKKLEE).

As to quaternary structure, homodimer.

In terms of biological role, negative regulator of protease production and sporulation. In Bacillus mycoides (strain KBAB4) (Bacillus weihenstephanensis), this protein is HTH-type transcriptional regulator Hpr.